The following is a 266-amino-acid chain: MVKVTFNSALAQKEAKKDESKSGEEALIIPPDAVAVDCKDPDEVVPVGQRRAWCWCMCFGLAFMLAGVILGGAYLYKYFAFQPDDVYYCGIKYIKDDVILNEPSADAPASRYQTIEENIKIFEEDEVEFISVPVPEFADSDPANIVHDFNKKLTAYLDLNLDKCYVIPLNTSIVMPPKNLLELLINIKAGTYLPQSYLIHEHMVITDRIENIDHLGFYIYRLCHDKETYKLQRRETIKGIQKRSADVCVTIRHFENRFAVETLICP.

The Cytoplasmic segment spans residues 1 to 54 (MVKVTFNSALAQKEAKKDESKSGEEALIIPPDAVAVDCKDPDEVVPVGQRRAWC). Residues 55-75 (WCMCFGLAFMLAGVILGGAYL) form a helical; Signal-anchor for type II membrane protein membrane-spanning segment. Residues 76–266 (YKYFAFQPDD…RFAVETLICP (191 aa)) are Lumenal-facing. The segment at 102 to 134 (EPSADAPASRYQTIEENIKIFEEDEVEFISVPV) is necessary for interaction with APP and inhibitor effects on APP processing. A BRICHOS domain is found at 137–231 (FADSDPANIV…LCHDKETYKL (95 aa)). Cystine bridges form between cysteine 164/cysteine 223 and cysteine 248/cysteine 265. The N-linked (GlcNAc...) asparagine glycan is linked to asparagine 170.

The protein belongs to the ITM2 family. In terms of assembly, homodimer; disulfide-linked. Interacts with SPPL2A and SPPL2B. Interacts with APP. Mature BRI2 (mBRI2) interacts with the APP amyloid-beta A4 protein; the interaction occurs at the cell surface and in the endocytic compartments and enable alpha- and beta-secretase-induced APP cleavage inhibition. Mature BRI2 (mBRI2) interacts with the APP C99; the interaction occurs in the endocytic compartments and enable gamma-secretase-induced C99 cleavage inhibition. May form heterodimers with Bri23 peptide and APP amyloid-beta protein 40. Interacts with ADAM7 in sperm; the interaction increases following capacitation. In terms of processing, the ectodomain C-terminal part of the imBRI2 is processed by furin producing a secreted Bri23 peptide and a mature BRI2, membrane form (mBRI2). The remaining part of the ectodomain of mBRI2 containing the BRICHOS domain is cleaved by ADAM10 and is secreted (BRI2C, soluble form). The membrane-bound N-terminal fragment (BRI2C, membrane form) is further proteolytically processed by SPPL2A and SPPL2B through regulated intramembrane proteolysis producing a secreted C-peptide and a BRI2 intracellular domain (BRI2 ICD) released in the cytosol. Shedding by ADAM10 facilitates intramembrane cleavage but is not absolutely required for BRI2 ICD generation. Post-translationally, glycosylation at Asn-170 is important for cell surface localization, but doesn't affect furin- and ADAM10-induced proteolytic processing.

It is found in the golgi apparatus membrane. The protein resides in the cell membrane. The protein localises to the endosome membrane. Its subcellular location is the secreted. Functionally, plays a regulatory role in the processing of the amyloid-beta A4 precursor protein (APP) and acts as an inhibitor of the amyloid-beta peptide aggregation and fibrils deposition. Plays a role in the induction of neurite outgrowth. Functions as a protease inhibitor by blocking access of secretases to APP cleavage sites. Its function is as follows. Mature BRI2 (mBRI2) functions as a modulator of the amyloid-beta A4 precursor protein (APP) processing leading to a strong reduction in the secretion of secretase-processed amyloid-beta protein 40 and amyloid-beta protein 42. In terms of biological role, bri23 peptide prevents aggregation of APP amyloid-beta protein 42 into toxic oligomers. This is Integral membrane protein 2B (ITM2B) from Bos taurus (Bovine).